A 164-amino-acid chain; its full sequence is S-ribosylhomocysteine lyase (164 aa).

3 residues coordinate Fe cation: His-54, His-58, and Cys-128.

It belongs to the LuxS family. In terms of assembly, homodimer. Fe cation is required as a cofactor.

It carries out the reaction S-(5-deoxy-D-ribos-5-yl)-L-homocysteine = (S)-4,5-dihydroxypentane-2,3-dione + L-homocysteine. Its function is as follows. Involved in the synthesis of autoinducer 2 (AI-2) which is secreted by bacteria and is used to communicate both the cell density and the metabolic potential of the environment. The regulation of gene expression in response to changes in cell density is called quorum sensing. Catalyzes the transformation of S-ribosylhomocysteine (RHC) to homocysteine (HC) and 4,5-dihydroxy-2,3-pentadione (DPD). In Campylobacter jejuni subsp. jejuni serotype O:23/36 (strain 81-176), this protein is S-ribosylhomocysteine lyase.